A 177-amino-acid polypeptide reads, in one-letter code: Dual-action ribosomal maturation protein DarP (177 aa).

The tract at residues 1-26 is disordered; that stretch reads MKIVGDSEHFKQPYDSDEEYVSKTED.

This sequence belongs to the DarP family.

The protein localises to the cytoplasm. Member of a network of 50S ribosomal subunit biogenesis factors which assembles along the 30S-50S interface, preventing incorrect 23S rRNA structures from forming. Promotes peptidyl transferase center (PTC) maturation. The chain is Dual-action ribosomal maturation protein DarP from Shewanella sp. (strain ANA-3).